The following is a 321-amino-acid chain: MRTYYIFSSGRLRRMDNTLALELETERRVVPVEDIDHIYCFSELDLNTRLLDFLAQKQICLHFFNYYGHYSGSFIPRESQLSGFLLVRQVEHYLDQAKRLELARTFVEGALHNIRRNLEKREYDDICSKLDEIREGIGKTASIEELMSLEAHARKAYYDTWEEITGWEFGSRSKRPPANALNALISFGNAMMYTVVLKEIYRTALNPTISYLHEPSERRYSLALDVAEIFKPVFVDRLIFRLINLNMLKETHFDTNVNFVYLTEGGRKVFVKEFEETLEKTILHRKLKRNIRYKSLVRLDLYKLIKHLLGEEKYSPMKVWW.

Mn(2+)-binding residues include E150, H213, and E228.

Belongs to the CRISPR-associated endonuclease Cas1 family. As to quaternary structure, homodimer, forms a heterotetramer with a Cas2 homodimer. It depends on Mg(2+) as a cofactor. Requires Mn(2+) as cofactor.

In terms of biological role, CRISPR (clustered regularly interspaced short palindromic repeat), is an adaptive immune system that provides protection against mobile genetic elements (viruses, transposable elements and conjugative plasmids). CRISPR clusters contain spacers, sequences complementary to antecedent mobile elements, and target invading nucleic acids. CRISPR clusters are transcribed and processed into CRISPR RNA (crRNA). Acts as a dsDNA endonuclease. Involved in the integration of spacer DNA into the CRISPR cassette. The sequence is that of CRISPR-associated endonuclease Cas1 2 from Moorella thermoacetica (strain ATCC 39073 / JCM 9320).